A 234-amino-acid polypeptide reads, in one-letter code: Hydrolase in agr operon (234 aa).

The CN hydrolase domain occupies 1–212 (ILYNKDTDVV…EKELTVTIDI (212 aa)). Glu14 acts as the Proton acceptor in catalysis. Lys83 (proton donor) is an active-site residue. Cys119 serves as the catalytic Nucleophile.

This sequence belongs to the carbon-nitrogen hydrolase superfamily. NIT1/NIT2 family.

This is Hydrolase in agr operon from Staphylococcus lugdunensis.